A 404-amino-acid chain; its full sequence is Probable tRNA sulfurtransferase (404 aa).

The THUMP domain maps to 61–166 (QTLVTGLPKI…HDATYMMAQV (106 aa)). ATP contacts are provided by residues 184-185 (ML), 209-210 (HF), arginine 266, glycine 288, and glutamine 297.

Belongs to the ThiI family.

The protein resides in the cytoplasm. The catalysed reaction is [ThiI sulfur-carrier protein]-S-sulfanyl-L-cysteine + a uridine in tRNA + 2 reduced [2Fe-2S]-[ferredoxin] + ATP + H(+) = [ThiI sulfur-carrier protein]-L-cysteine + a 4-thiouridine in tRNA + 2 oxidized [2Fe-2S]-[ferredoxin] + AMP + diphosphate. It carries out the reaction [ThiS sulfur-carrier protein]-C-terminal Gly-Gly-AMP + S-sulfanyl-L-cysteinyl-[cysteine desulfurase] + AH2 = [ThiS sulfur-carrier protein]-C-terminal-Gly-aminoethanethioate + L-cysteinyl-[cysteine desulfurase] + A + AMP + 2 H(+). It functions in the pathway cofactor biosynthesis; thiamine diphosphate biosynthesis. Functionally, catalyzes the ATP-dependent transfer of a sulfur to tRNA to produce 4-thiouridine in position 8 of tRNAs, which functions as a near-UV photosensor. Also catalyzes the transfer of sulfur to the sulfur carrier protein ThiS, forming ThiS-thiocarboxylate. This is a step in the synthesis of thiazole, in the thiamine biosynthesis pathway. The sulfur is donated as persulfide by IscS. This chain is Probable tRNA sulfurtransferase, found in Lysinibacillus sphaericus (strain C3-41).